The sequence spans 107 residues: High mobility group protein HMG-I/HMG-Y (107 aa).

Residues 1-107 (MSESSSKSSQ…ISQESSEEEQ (107 aa)) form a disordered region. N-acetylserine is present on Ser-2. Residue Lys-7 is modified to N6-acetyllysine. Ser-8 carries the ADP-ribosylserine modification. Ser-9 carries the ADP-ribosylserine; alternate modification. Ser-9 carries the phosphoserine; alternate modification. The residue at position 15 (Lys-15) is an N6-acetyllysine; alternate. Residue Lys-15 forms a Glycyl lysine isopeptide (Lys-Gly) (interchain with G-Cter in SUMO2); alternate linkage. Basic and acidic residues predominate over residues 15 to 24 (KQEKDGTEKR). The segment at residues 21 to 31 (TEKRGRGRPRK) is a DNA-binding region (a.T hook 1). Arg-26 bears the Asymmetric dimethylarginine; alternate mark. Arg-26 is modified (omega-N-methylarginine; alternate). At Arg-26 the chain carries Symmetric dimethylarginine; alternate. Residue Ser-36 is modified to Phosphoserine; by HIPK2 and CDC2. Thr-39 carries the phosphothreonine modification. Ser-44 and Ser-49 each carry phosphoserine. Residue Thr-53 is modified to Phosphothreonine; by HIPK2 and CDC2. DNA-binding regions (a.T hook) lie at residues 53–63 (TPKRPRGRPKG) and 78–89 (APGRKPRGRPKK). The interval 53 to 77 (TPKRPRGRPKGSKNKGAAKTRKATT) is interaction with HIPK2. The segment covering 55 to 74 (KRPRGRPKGSKNKGAAKTRK) has biased composition (basic residues). Residues Arg-58 and Arg-60 each carry the asymmetric dimethylarginine; by PRMT6; alternate modification. Omega-N-methylarginine; by PRMT6; alternate is present on residues Arg-58 and Arg-60. Over residues 93 to 107 (EEEEGISQESSEEEQ) the composition is skewed to acidic residues. Ser-99, Ser-102, and Ser-103 each carry phosphoserine.

It belongs to the HMGA family. Interacts with HIPK2. Post-translationally, isoforms HMG-I and HMG-Y can be phosphorylated by HIPK2. Phosphorylation may modulate DNA-binding affinity. Methylation at Arg-58 is mutually exclusive with methylation at Arg-60.

Its subcellular location is the nucleus. The protein resides in the chromosome. Functionally, HMG-I/Y bind preferentially to the minor groove of A+T rich regions in double-stranded DNA. It is suggested that these proteins could function in nucleosome phasing and in the 3'-end processing of mRNA transcripts. They are also involved in the transcription regulation of genes containing, or in close proximity to A+T-rich regions. In Cricetulus griseus (Chinese hamster), this protein is High mobility group protein HMG-I/HMG-Y (HMGA1).